Here is an 80-residue protein sequence, read N- to C-terminus: UPF0125 protein PD_1376 (80 aa).

The protein belongs to the UPF0125 (RnfH) family.

This is UPF0125 protein PD_1376 from Xylella fastidiosa (strain Temecula1 / ATCC 700964).